The chain runs to 1069 residues: Carbamoyl phosphate synthase large chain (1069 aa).

A carboxyphosphate synthetic domain region spans residues 1 to 401; it reads MPLNKDIKKV…AFLKGIRSLE (401 aa). Residues R129, R169, G175, G176, K208, V210, E215, G241, I242, H243, Q284, and E298 each coordinate ATP. Residues 133–327 form the ATP-grasp 1 domain; that stretch reads RDMMNRIGEP…IAKLAAKIAL (195 aa). Mg(2+) is bound by residues Q284, E298, and N300. Mn(2+) is bound by residues Q284, E298, and N300. The tract at residues 402–549 is oligomerization domain; the sequence is IGKYSLDHKK…YSTYEQYDEV (148 aa). The tract at residues 550-932 is carbamoyl phosphate synthetic domain; the sequence is EVSNRRKVIV…ALYKGFVGAN (383 aa). The 191-residue stretch at 674–864 folds into the ATP-grasp 2 domain; sequence DELLERLDIS…IVDIATQVMM (191 aa). Residues R710, K749, L751, E755, G780, V781, H782, S783, Q823, and E835 each coordinate ATP. Residues Q823, E835, and N837 each coordinate Mg(2+). Q823, E835, and N837 together coordinate Mn(2+). An MGS-like domain is found at 932–1069; it reads NMYPSKEKGK…KDLEVFDITK (138 aa). The allosteric domain stretch occupies residues 933 to 1069; the sequence is MYPSKEKGKI…KDLEVFDITK (137 aa).

This sequence belongs to the CarB family. In terms of assembly, composed of two chains; the small (or glutamine) chain promotes the hydrolysis of glutamine to ammonia, which is used by the large (or ammonia) chain to synthesize carbamoyl phosphate. Tetramer of heterodimers (alpha,beta)4. Requires Mg(2+) as cofactor. Mn(2+) is required as a cofactor.

The catalysed reaction is hydrogencarbonate + L-glutamine + 2 ATP + H2O = carbamoyl phosphate + L-glutamate + 2 ADP + phosphate + 2 H(+). It carries out the reaction hydrogencarbonate + NH4(+) + 2 ATP = carbamoyl phosphate + 2 ADP + phosphate + 2 H(+). Its pathway is amino-acid biosynthesis; L-arginine biosynthesis; carbamoyl phosphate from bicarbonate: step 1/1. It functions in the pathway pyrimidine metabolism; UMP biosynthesis via de novo pathway; (S)-dihydroorotate from bicarbonate: step 1/3. Large subunit of the glutamine-dependent carbamoyl phosphate synthetase (CPSase). CPSase catalyzes the formation of carbamoyl phosphate from the ammonia moiety of glutamine, carbonate, and phosphate donated by ATP, constituting the first step of 2 biosynthetic pathways, one leading to arginine and/or urea and the other to pyrimidine nucleotides. The large subunit (synthetase) binds the substrates ammonia (free or transferred from glutamine from the small subunit), hydrogencarbonate and ATP and carries out an ATP-coupled ligase reaction, activating hydrogencarbonate by forming carboxy phosphate which reacts with ammonia to form carbamoyl phosphate. In Clostridium botulinum (strain Eklund 17B / Type B), this protein is Carbamoyl phosphate synthase large chain.